Consider the following 389-residue polypeptide: 8-amino-7-oxononanoate synthase (389 aa).

Substrate is bound at residue Arg23. Position 114-115 (114-115 (GY)) interacts with pyridoxal 5'-phosphate. His139 contributes to the substrate binding site. 3 residues coordinate pyridoxal 5'-phosphate: Ser185, His213, and Thr242. At Lys245 the chain carries N6-(pyridoxal phosphate)lysine. Thr357 contributes to the substrate binding site.

Belongs to the class-II pyridoxal-phosphate-dependent aminotransferase family. BioF subfamily. As to quaternary structure, homodimer. Pyridoxal 5'-phosphate serves as cofactor.

It catalyses the reaction 6-carboxyhexanoyl-[ACP] + L-alanine + H(+) = (8S)-8-amino-7-oxononanoate + holo-[ACP] + CO2. It functions in the pathway cofactor biosynthesis; biotin biosynthesis. In terms of biological role, catalyzes the decarboxylative condensation of pimeloyl-[acyl-carrier protein] and L-alanine to produce 8-amino-7-oxononanoate (AON), [acyl-carrier protein], and carbon dioxide. The chain is 8-amino-7-oxononanoate synthase from Acidithiobacillus ferrooxidans (strain ATCC 23270 / DSM 14882 / CIP 104768 / NCIMB 8455) (Ferrobacillus ferrooxidans (strain ATCC 23270)).